Consider the following 459-residue polypeptide: Zinc finger and BTB domain-containing protein 9 (459 aa).

A BTB domain is found at 48–112 (CDVSLLVQGR…IYSGSLHLPL (65 aa)). Over residues 178 to 189 (VRSSASTENSVL) the composition is skewed to polar residues. Disordered regions lie at residues 178–200 (VRSSASTENSVLPESPAGGEGSE) and 212–274 (EEEE…ASQI). Glycyl lysine isopeptide (Lys-Gly) (interchain with G-Cter in SUMO2) cross-links involve residues lysine 285, lysine 293, and lysine 368. Positions 293 to 356 (KEKTKVLSGE…GGTGQAMHGP (64 aa)) are disordered. Residues 397-419 (FGCGICNKRFKLKHHLTEHMKTH) form a C2H2-type 1 zinc finger. The segment at 424–446 (HACPHCGRRFRVQAFFLRHRDLC) adopts a C2H2-type 2; atypical zinc-finger fold.

It localises to the nucleus. In terms of biological role, may be involved in transcriptional regulation. This Mus musculus (Mouse) protein is Zinc finger and BTB domain-containing protein 9 (Zbtb9).